The sequence spans 265 residues: Hydroxyethylthiazole kinase (265 aa).

Substrate is bound at residue methionine 50. Arginine 125 and threonine 171 together coordinate ATP. Glycine 198 serves as a coordination point for substrate.

Belongs to the Thz kinase family. Mg(2+) serves as cofactor.

It carries out the reaction 5-(2-hydroxyethyl)-4-methylthiazole + ATP = 4-methyl-5-(2-phosphooxyethyl)-thiazole + ADP + H(+). It participates in cofactor biosynthesis; thiamine diphosphate biosynthesis; 4-methyl-5-(2-phosphoethyl)-thiazole from 5-(2-hydroxyethyl)-4-methylthiazole: step 1/1. Catalyzes the phosphorylation of the hydroxyl group of 4-methyl-5-beta-hydroxyethylthiazole (THZ). The chain is Hydroxyethylthiazole kinase from Salmonella typhimurium (strain LT2 / SGSC1412 / ATCC 700720).